We begin with the raw amino-acid sequence, 454 residues long: Immediate-early protein ICP-46 homolog (454 aa).

Positions 330-357 (EKDIETIEKYEKTIQELIVELHNLYLKR) form a coiled coil. A disordered region spans residues 428–454 (SSPTASLSSLSPPSSNNNSPIRSPIRM).

Belongs to the IIV-6 393L family.

This chain is Immediate-early protein ICP-46 homolog, found in Invertebrate iridescent virus 6 (IIV-6).